The sequence spans 291 residues: Formamidopyrimidine-DNA glycosylase (291 aa).

Pro2 (schiff-base intermediate with DNA) is an active-site residue. Glu3 functions as the Proton donor in the catalytic mechanism. The active-site Proton donor; for beta-elimination activity is the Lys60. Residues His97, Arg116, and Arg161 each contribute to the DNA site. Residues 246–280 form an FPG-type zinc finger; that stretch reads WVYNRAGEPCRVCGMPIQRIRLAGRSSHFCSECQT. Catalysis depends on Arg270, which acts as the Proton donor; for delta-elimination activity.

This sequence belongs to the FPG family. In terms of assembly, monomer. Zn(2+) is required as a cofactor.

The catalysed reaction is Hydrolysis of DNA containing ring-opened 7-methylguanine residues, releasing 2,6-diamino-4-hydroxy-5-(N-methyl)formamidopyrimidine.. The enzyme catalyses 2'-deoxyribonucleotide-(2'-deoxyribose 5'-phosphate)-2'-deoxyribonucleotide-DNA = a 3'-end 2'-deoxyribonucleotide-(2,3-dehydro-2,3-deoxyribose 5'-phosphate)-DNA + a 5'-end 5'-phospho-2'-deoxyribonucleoside-DNA + H(+). Functionally, involved in base excision repair of DNA damaged by oxidation or by mutagenic agents. Acts as a DNA glycosylase that recognizes and removes damaged bases. Has a preference for oxidized purines, such as 7,8-dihydro-8-oxoguanine (8-oxoG). Has AP (apurinic/apyrimidinic) lyase activity and introduces nicks in the DNA strand. Cleaves the DNA backbone by beta-delta elimination to generate a single-strand break at the site of the removed base with both 3'- and 5'-phosphates. The sequence is that of Formamidopyrimidine-DNA glycosylase from Nostoc punctiforme (strain ATCC 29133 / PCC 73102).